We begin with the raw amino-acid sequence, 154 residues long: SsrA-binding protein (154 aa).

The tract at residues 126 to 154 is disordered; the sequence is GKKKYDKREDMKKKEAQREVERAFRERQK. Basic and acidic residues predominate over residues 131–154; sequence DKREDMKKKEAQREVERAFRERQK.

The protein belongs to the SmpB family.

The protein localises to the cytoplasm. Required for rescue of stalled ribosomes mediated by trans-translation. Binds to transfer-messenger RNA (tmRNA), required for stable association of tmRNA with ribosomes. tmRNA and SmpB together mimic tRNA shape, replacing the anticodon stem-loop with SmpB. tmRNA is encoded by the ssrA gene; the 2 termini fold to resemble tRNA(Ala) and it encodes a 'tag peptide', a short internal open reading frame. During trans-translation Ala-aminoacylated tmRNA acts like a tRNA, entering the A-site of stalled ribosomes, displacing the stalled mRNA. The ribosome then switches to translate the ORF on the tmRNA; the nascent peptide is terminated with the 'tag peptide' encoded by the tmRNA and targeted for degradation. The ribosome is freed to recommence translation, which seems to be the essential function of trans-translation. This Anoxybacillus flavithermus (strain DSM 21510 / WK1) protein is SsrA-binding protein.